A 101-amino-acid polypeptide reads, in one-letter code: Small ribosomal subunit protein bS18c (101 aa).

The protein belongs to the bacterial ribosomal protein bS18 family. Part of the 30S ribosomal subunit.

The protein localises to the plastid. Its subcellular location is the chloroplast. The sequence is that of Small ribosomal subunit protein bS18c from Citrus sinensis (Sweet orange).